We begin with the raw amino-acid sequence, 666 residues long: Zinc finger protein 710 (666 aa).

Glycyl lysine isopeptide (Lys-Gly) (interchain with G-Cter in SUMO2) cross-links involve residues K110 and K113. The tract at residues 113-141 (KAEEEEEQEVYEVSVPGDDKDPGPAEAPA) is disordered. 3 C2H2-type zinc fingers span residues 297–319 (WQCR…ILGH), 325–347 (HSCP…LLTH), and 353–375 (HKCQ…MLLH). A Glycyl lysine isopeptide (Lys-Gly) (interchain with G-Cter in SUMO2) cross-link involves residue K379. 8 consecutive C2H2-type zinc fingers follow at residues 381–403 (YSCH…EVKH), 409–431 (HVCV…LASH), 437–459 (YQCL…MLKH), 465–487 (FVCT…SLTH), 493–515 (FKCE…MLIH), 521–543 (YQCH…MIVH), 549–571 (FKCK…MHLH), and 577–600 (FKCP…KVKH).

This sequence belongs to the krueppel C2H2-type zinc-finger protein family.

It is found in the nucleus. In terms of biological role, may be involved in transcriptional regulation. The polypeptide is Zinc finger protein 710 (Znf710) (Mus musculus (Mouse)).